The chain runs to 89 residues: Large ribosomal subunit protein bL27 (89 aa).

Positions 1–21 are disordered; the sequence is MAHKKAGGSSRNGRDSESKRL.

This sequence belongs to the bacterial ribosomal protein bL27 family.

The sequence is that of Large ribosomal subunit protein bL27 from Brucella anthropi (strain ATCC 49188 / DSM 6882 / CCUG 24695 / JCM 21032 / LMG 3331 / NBRC 15819 / NCTC 12168 / Alc 37) (Ochrobactrum anthropi).